The primary structure comprises 207 residues: Segregation and condensation protein B (207 aa).

The protein belongs to the ScpB family. In terms of assembly, homodimer. Homodimerization may be required to stabilize the binding of ScpA to the Smc head domains. Component of a cohesin-like complex composed of ScpA, ScpB and the Smc homodimer, in which ScpA and ScpB bind to the head domain of Smc. The presence of the three proteins is required for the association of the complex with DNA.

It localises to the cytoplasm. In terms of biological role, participates in chromosomal partition during cell division. May act via the formation of a condensin-like complex containing Smc and ScpA that pull DNA away from mid-cell into both cell halves. The protein is Segregation and condensation protein B of Mycoplasmopsis pulmonis (strain UAB CTIP) (Mycoplasma pulmonis).